A 108-amino-acid polypeptide reads, in one-letter code: DNA-binding protein HBbu (108 aa).

Belongs to the bacterial histone-like protein family.

Histone-like DNA-binding protein which is capable of wrapping DNA to stabilize it, and thus to prevent its denaturation under extreme environmental conditions. The protein is DNA-binding protein HBbu (hbb) of Borreliella japonica (Borrelia japonica).